We begin with the raw amino-acid sequence, 434 residues long: Trehalose-phosphatase (434 aa).

Asp-156 and Asp-158 together coordinate Mg(2+). Residue Asp-158 is the Proton donor/acceptor of the active site. 275–277 contributes to the substrate binding site; that stretch reads QKK. Mg(2+) is bound at residue Asp-366.

It belongs to the gob-1 trehalose phosphatase family. Requires Mg(2+) as cofactor.

It catalyses the reaction alpha,alpha-trehalose 6-phosphate + H2O = alpha,alpha-trehalose + phosphate. Functionally, catalyzes the hydrolysis of trehalose 6-phosphate to trehalose and phosphate; prevents the accumulation of toxic levels of trehalose 6-phosphate. This chain is Trehalose-phosphatase (gob-1), found in Caenorhabditis briggsae.